Here is an 805-residue protein sequence, read N- to C-terminus: Polycystin-2-like protein 1 (805 aa).

Positions 1-59 (MNAVGSPEGQELQKLGSGAWDNPAYSGPPSPHGTLRVCTISSTGPLQPQPKKPEDEPQE) are disordered. At 1-103 (MNAVGSPEGQ…ELYIKTTLRE (103 aa)) the chain is on the cytoplasmic side. Cys38 is lipidated: S-palmitoyl cysteine. The chain crosses the membrane as a helical span at residues 104 to 124 (LLVYIVFLVDICLLTYGMTSS). Residues 125–356 (SAYYYTKVMS…NWDFFIVGCE (232 aa)) lie on the Extracellular side of the membrane. N-linked (GlcNAc...) asparagine glycans are attached at residues Asn177 and Asn207. A disulfide bridge links Cys210 with Cys223. An N-linked (GlcNAc...) asparagine glycan is attached at Asn241. Residues 357 to 376 (VIFCVFIFYYVVEEILELHI) form a helical membrane-spanning segment. 2 residues coordinate Ca(2+): Glu370 and Glu373. Residues 377 to 384 (HRLRYLSS) are Cytoplasmic-facing. The helical transmembrane segment at 385 to 405 (IWNILDLVVILLSIVAVGFHI) threads the bilayer. Residues Asn387 and Asp390 each contribute to the Ca(2+) site. Residues 406–433 (FRTLEVNRLMGKLLQQPNTYADFEFLAF) are Extracellular-facing. The helical transmembrane segment at 434 to 454 (WQTQYNNMNAVNLFFAWIKIF) threads the bilayer. The Cytoplasmic segment spans residues 455-479 (KYISFNKTMTQLSSTLARCAKDILG). The helical transmembrane segment at 480–499 (FAVMFFIVFFAYAQLGYLLF) threads the bilayer. Residues 500–511 (GTQVENFSTFIK) lie on the Extracellular side of the membrane. An N-linked (GlcNAc...) asparagine glycan is attached at Asn505. Residues 512 to 526 (CIFTQFRIILGDFDY) constitute an intramembrane region (pore-forming). The Extracellular segment spans residues 527-536 (NAIDNANRIL). Residues 537-557 (GPAYFVTYVFFVFFVLLNMFL) traverse the membrane as a helical segment. Residues 558–805 (AIINDTYSEV…RGEIPTLQRS (248 aa)) are Cytoplasmic-facing. Positions 633–668 (HEITELTATFTKFDRDGNRILDEKEQEKMRQDLEEE) constitute an EF-hand domain. Coiled-coil stretches lie at residues 650–686 (NRIL…IVSS) and 700–740 (GWVS…MLER). Positions 704 to 763 (GEEFYMLTRRVLQLETVLEGVVSQIDAVGSKLKMLERKGWLAPSPGVKEQAIWKHPQPAP) are required for homooligomerization. A disordered region spans residues 759–805 (PQPAPAVTPDPWGVQGGQESEVPYKREEEALEERRLSRGEIPTLQRS). Basic and acidic residues predominate over residues 780–796 (VPYKREEEALEERRLSR).

It belongs to the polycystin family. As to quaternary structure, oligomer. Functional PKD2L1 homotetramer can be formed either through C-terminal trimerization followed by N-terminal dimerization of a fourth subunit with a subunit in the trimer or through dimerization followed by trimerization. Heterotetramer with either PKD1L1, PKD1L3 or PKD1; the heterotetrameric complex contains three PKD1L2 chains plus one chain from another family member. Interacts with PKD1L1, forming a ciliary calcium channel. Interacts with PKD1L3, forming a cation channel that is activated by low extracellular pH. Interacts with PKD1; this heteromeric functional cation channels is opened by hypo-osmotic stimulation. Interacts with RACK1; inhibits the channel activity possibly by impairing localization to the cell membrane. Post-translationally, palmitoylation is important for expression at the cell membrane and for channel activity. As to expression, detected in taste bud cells in fungiform papillae (at protein level). Ubiquitous. Expressed in adult heart, skeletal muscle, brain, spleen, testis, retina and liver. Isoform 4 appears to be expressed only in transformed lymphoblasts.

It localises to the cell projection. The protein resides in the cilium membrane. Its subcellular location is the cell membrane. It is found in the cytoplasmic vesicle. The catalysed reaction is Ca(2+)(in) = Ca(2+)(out). The enzyme catalyses Na(+)(in) = Na(+)(out). It catalyses the reaction K(+)(in) = K(+)(out). It carries out the reaction Mg(2+)(in) = Mg(2+)(out). Its activity is regulated as follows. The non-selective cation channel is gated following an off-response property by acid: gated open after the removal of acid stimulus, but not during acid application. Channel activity is inhibited by phosphatidylinositol-4,5-bisphosphate (PIP2). Non-selective cation channel activity is substantially increased when either the extracellular or intracellular calcium-ion concentration is raised. Regulation of non-selective cation channel activity by external calcium is bimodal, first sensitizing and subsequently inactivating the current. Homotetrameric, non-selective cation channel that is permeable to sodium, potassium, magnesium and calcium. Also forms functionnal heteromeric channels with PKD1, PKD1L1 and PKD1L3. Pore-forming subunit of a heterotetrameric, non-selective cation channel, formed by PKD1L2 and PKD1L3, that is permeable to sodium, potassium, magnesium and calcium and which may act as a sour taste receptor in gustatory cells; however, its contribution to sour taste perception is unclear in vivo and may be indirect. The homomeric and heteromeric channels formed by PKD1L2 and PKD1L3 are activated by low pH and Ca(2+), but opens only when the extracellular pH rises again and after the removal of acid stimulus. Pore-forming subunit of a calcium-permeant ion channel formed by PKD1L2 and PKD1L1 in primary cilia, where it controls cilium calcium concentration, without affecting cytoplasmic calcium concentration, and regulates sonic hedgehog/SHH signaling and GLI2 transcription. The PKD1L1:PKD2L1 complex channel is mechanosensitive only at high pressures and is highly temperature sensitive. Pore-forming subunit of a calcium-permeant ion channel formed by PKD1L2 and PKD1 that produces a transient increase in intracellular calcium concentration upon hypo-osmotic stimulation (200 mOsm). May play a role in the perception of carbonation taste. May play a role in the sensory perception of water, via a mechanism that activates the channel in response to dilution of salivary bicarbonate and changes in salivary pH. This chain is Polycystin-2-like protein 1, found in Homo sapiens (Human).